The sequence spans 506 residues: Maturase K (506 aa).

It belongs to the intron maturase 2 family. MatK subfamily.

The protein localises to the plastid. The protein resides in the chloroplast. In terms of biological role, usually encoded in the trnK tRNA gene intron. Probably assists in splicing its own and other chloroplast group II introns. This chain is Maturase K, found in Trifolium wormskioldii (Cows clover).